Here is a 388-residue protein sequence, read N- to C-terminus: Chorismate synthase (388 aa).

Arg-39 and Arg-45 together coordinate NADP(+). FMN contacts are provided by residues 130–132 (RSS), 251–252 (NA), Gly-296, 311–315 (KPIPT), and Arg-337.

This sequence belongs to the chorismate synthase family. Homotetramer. The cofactor is FMNH2.

The enzyme catalyses 5-O-(1-carboxyvinyl)-3-phosphoshikimate = chorismate + phosphate. The protein operates within metabolic intermediate biosynthesis; chorismate biosynthesis; chorismate from D-erythrose 4-phosphate and phosphoenolpyruvate: step 7/7. Its function is as follows. Catalyzes the anti-1,4-elimination of the C-3 phosphate and the C-6 proR hydrogen from 5-enolpyruvylshikimate-3-phosphate (EPSP) to yield chorismate, which is the branch point compound that serves as the starting substrate for the three terminal pathways of aromatic amino acid biosynthesis. This reaction introduces a second double bond into the aromatic ring system. This Lactococcus lactis subsp. cremoris (strain SK11) protein is Chorismate synthase.